The sequence spans 136 residues: Purkinje cell protein 2 homolog (136 aa).

Disordered regions lie at residues 1–64 and 86–136; these read MMDQ…PEMD and SSLP…TQAP. One can recognise a GoLoco 1 domain in the interval 23–45; sequence QEGFFNLLSHVQGDRMEGQRCSL. Residues 49–59 are compositionally biased toward polar residues; sequence PGQTTKSQSDP. The region spanning 63–85 is the GoLoco 2 domain; the sequence is MDSLMDMLASTQGRRMDDQRVTV. Polar residues predominate over residues 107–117; the sequence is LSPQPLLTPQD. At serine 127 the chain carries Phosphoserine.

In terms of biological role, may function as a cell-type specific modulator for G protein-mediated cell signaling. In Homo sapiens (Human), this protein is Purkinje cell protein 2 homolog (PCP2).